A 609-amino-acid polypeptide reads, in one-letter code: UvrABC system protein C (609 aa).

Residues 15 to 92 (TGSGVYQMQD…IKQFRPRYNV (78 aa)) form the GIY-YIG domain. Residues 202–237 (DQVIIKLTERMEVTSENLVFEEAAHYRDQIRQLRRL) enclose the UVR domain.

It belongs to the UvrC family. As to quaternary structure, interacts with UvrB in an incision complex.

The protein localises to the cytoplasm. The UvrABC repair system catalyzes the recognition and processing of DNA lesions. UvrC both incises the 5' and 3' sides of the lesion. The N-terminal half is responsible for the 3' incision and the C-terminal half is responsible for the 5' incision. This is UvrABC system protein C from Coxiella burnetii (strain RSA 493 / Nine Mile phase I).